Here is a 439-residue protein sequence, read N- to C-terminus: Maintenance of mitochondrial morphology protein 1 (439 aa).

The Lumenal portion of the chain corresponds to 1 to 76; that stretch reads MSQDLIETTA…NGNTWSFTQG (76 aa). Residues 77 to 97 form a helical membrane-spanning segment; it reads LVIGQVSVIFIIIVFVKFFVF. At 98–439 the chain is on the cytoplasmic side; that stretch reads ADSSSHIPTK…TPGEYVNSNI (342 aa). 3 disordered regions span residues 125–145, 309–336, and 405–425; these read KHSN…SLDS, MNGY…DGGT, and REPV…GTSA. In terms of domain architecture, SMP-LTD spans 165 to 395; sequence ASESLDWFNV…EPRFQVVRLP (231 aa). Composition is skewed to low complexity over residues 315 to 326 and 410 to 424; these read ENANGDGASSSN and KKTT…NGTS.

The protein belongs to the MMM1 family. Homodimer. Component of the ER-mitochondria encounter structure (ERMES) or MDM complex, composed of MMM1, MDM10, MDM12 and MDM34. An MMM1 homodimer associates with one molecule of MDM12 on each side in a pairwise head-to-tail manner, and the SMP-LTD domains of MMM1 and MDM12 generate a continuous hydrophobic tunnel for phospholipid trafficking.

The protein localises to the endoplasmic reticulum membrane. Component of the ERMES/MDM complex, which serves as a molecular tether to connect the endoplasmic reticulum (ER) and mitochondria. Components of this complex are involved in the control of mitochondrial shape and protein biogenesis, and function in nonvesicular lipid trafficking between the ER and mitochondria. The MDM12-MMM1 subcomplex functions in the major beta-barrel assembly pathway that is responsible for biogenesis of all outer membrane beta-barrel proteins, and acts in a late step after the SAM complex. The MDM10-MDM12-MMM1 subcomplex further acts in the TOM40-specific pathway after the action of the MDM12-MMM1 complex. Essential for establishing and maintaining the structure of mitochondria and maintenance of mtDNA nucleoids. This chain is Maintenance of mitochondrial morphology protein 1, found in Candida albicans (strain SC5314 / ATCC MYA-2876) (Yeast).